Reading from the N-terminus, the 447-residue chain is MDSSNVEENLNPETKSAEEQNPLAIFHSSLPIASLSLTLFPSSTQFLKLFAHHPNKVKIPTQASSLTHLSLSSVSPFPSSRISFKSTIAANPLQSPLSIVPRRPVDPSSAAALRRAAVVWFRNDLRVHDNECLNSANDECVSVLPVYCFDPRDYGKSSSGFDKTGPFRAQFLIESVSELRKNLQARGSNLVVRVGKPEAVLVELAKEIGADAVYAHREVSHDEVKAEGKIETAMKEEGVEVKYFWGSTLYHLDDLPFKIEDLPSNYGAFKDKVQKLEIRKTIAALDQLKSLPSRGDVELGDIPSLLDLGISPTPRTSQEGKPTMVGGETEALTRLKSFAADCQARLSKGNQKGGNNSVFGANFSCKISPWLAMGSISPRSMFDELKKTISASTTSTTPRNGPGDTGLNWLMYELLWRDFFRFITKKYSSAKTQVEAGPATACTGAFA.

A compositionally biased stretch (polar residues) spans Met-1–Thr-14. Residues Met-1–Gln-20 form a disordered region. Residues Arg-115 to Leu-249 enclose the Photolyase/cryptochrome alpha/beta domain.

It belongs to the DNA photolyase class-1 family. It depends on FAD as a cofactor.

The sequence is that of Blue-light photoreceptor PHR2 (PHR2) from Arabidopsis thaliana (Mouse-ear cress).